Here is an 82-residue protein sequence, read N- to C-terminus: uncharacterized protein (82 aa).

3 helical membrane-spanning segments follow: residues 1–21, 22–42, and 62–82; these read MSAS…SVST, VLLG…LAAF, and WRLL…LTLL.

The protein localises to the cell membrane. This is an uncharacterized protein from Stutzerimonas stutzeri (Pseudomonas stutzeri).